The chain runs to 320 residues: Variant surface glycoprotein ILTAT 1.2 (320 aa).

N-linked (GlcNAc...) asparagine glycosylation is found at Asn-146, Asn-282, and Asn-295. A disordered region spans residues 297-320 (TKATENGVPVAQTQTGGSETTTEK). The segment covering 308 to 320 (QTQTGGSETTTEK) has biased composition (low complexity).

The protein resides in the cell membrane. Its function is as follows. VSG forms a coat on the surface of the parasite. The trypanosome evades the immune response of the host by expressing a series of antigenically distinct VSGs from an estimated 1000 VSG genes. The protein is Variant surface glycoprotein ILTAT 1.2 of Trypanosoma brucei brucei.